The sequence spans 99 residues: Teretoxin Tsu6.4 (99 aa).

The signal sequence occupies residues 1 to 21 (MRLLLILVLLTPVIVAFSVDE). Positions 22 to 53 (ELNNADGANAASFTADQEVRHKRNLFPAIARR) are excised as a propeptide.

In terms of processing, contains 3 disulfide bonds. In terms of tissue distribution, expressed by the venom duct.

It localises to the secreted. The sequence is that of Teretoxin Tsu6.4 from Terebra subulata (Chocolate spotted auger).